Consider the following 145-residue polypeptide: Small ribosomal subunit protein bS6 (145 aa).

The protein belongs to the bacterial ribosomal protein bS6 family.

In terms of biological role, binds together with bS18 to 16S ribosomal RNA. This is Small ribosomal subunit protein bS6 from Mycoplasmopsis agalactiae (strain NCTC 10123 / CIP 59.7 / PG2) (Mycoplasma agalactiae).